We begin with the raw amino-acid sequence, 107 residues long: UPF0102 protein Tlet_0667 (107 aa).

The protein belongs to the UPF0102 family.

This chain is UPF0102 protein Tlet_0667, found in Pseudothermotoga lettingae (strain ATCC BAA-301 / DSM 14385 / NBRC 107922 / TMO) (Thermotoga lettingae).